The chain runs to 161 residues: Phosphopantetheine adenylyltransferase (161 aa).

A substrate-binding site is contributed by serine 8. Residues serine 8–phenylalanine 9 and histidine 16 each bind ATP. Substrate-binding residues include lysine 40, threonine 72, and arginine 86. ATP is bound by residues glycine 87–arginine 89, glutamate 97, and histidine 122–serine 128.

It belongs to the bacterial CoaD family. In terms of assembly, homohexamer. Mg(2+) is required as a cofactor.

The protein localises to the cytoplasm. It carries out the reaction (R)-4'-phosphopantetheine + ATP + H(+) = 3'-dephospho-CoA + diphosphate. Its pathway is cofactor biosynthesis; coenzyme A biosynthesis; CoA from (R)-pantothenate: step 4/5. Reversibly transfers an adenylyl group from ATP to 4'-phosphopantetheine, yielding dephospho-CoA (dPCoA) and pyrophosphate. In Gloeobacter violaceus (strain ATCC 29082 / PCC 7421), this protein is Phosphopantetheine adenylyltransferase.